Consider the following 208-residue polypeptide: FMN-dependent NADH:quinone oxidoreductase 2 (208 aa).

The protein belongs to the azoreductase type 1 family. In terms of assembly, homodimer. FMN is required as a cofactor.

The catalysed reaction is 2 a quinone + NADH + H(+) = 2 a 1,4-benzosemiquinone + NAD(+). It carries out the reaction N,N-dimethyl-1,4-phenylenediamine + anthranilate + 2 NAD(+) = 2-(4-dimethylaminophenyl)diazenylbenzoate + 2 NADH + 2 H(+). Functionally, quinone reductase that provides resistance to thiol-specific stress caused by electrophilic quinones. In terms of biological role, also exhibits azoreductase activity. Catalyzes the reductive cleavage of the azo bond in aromatic azo compounds to the corresponding amines. The polypeptide is FMN-dependent NADH:quinone oxidoreductase 2 (Bacillus cereus (strain ATCC 10987 / NRS 248)).